The chain runs to 261 residues: Major biofilm matrix component (261 aa).

A signal peptide spans 1–27 (MGMKKKLSLGVASAALGLALVGGGTWA). Positions 241–261 (DHTDKDGYVKENEKAHSEDKN) are disordered.

The protein belongs to the peptidase M73 family. In terms of assembly, forms fibers. Fibers have variable length and are 10-15 nm width. Interacts with obg (AC P20964) in pull-down experiments.

The protein localises to the secreted. Its subcellular location is the forespore intermembrane space. Its function is as follows. TasA is the major protein component of the biofilm extracellular matrix. It forms amyloid fibers that bind cells together in the biofilm. Exhibits an antibacterial activity against a variety of Gram-positive and Gram-negative bacteria. In laboratory strains, is also involved in proper spore coat assembly. This chain is Major biofilm matrix component, found in Bacillus subtilis (strain 168).